A 385-amino-acid polypeptide reads, in one-letter code: MEKAFYRDTWAEIDLDAIFYNVQSMKQHVGSHVEVIAVVKANAYGHGDIQVAKTALEAGATRLAVAFLDEALALRKKGISLDVPILVLGATKPQYAPLAASQNIALTVFRADWFEQAIVYAPYEQPLNVHMKLDTGMGRLGAKTKEEVQQMIYAIEQHPSFILEGVYTHFATADEQNIDYFSFQYDTFLHMLEWLSIQPPLIHCANSAAGLRYPDRIFNAVRFGISMYGLAPSQEMKSLLPYPLKEAFSLHSRLTHVKKVKGGEKISYGATYEAETDEWIGTVPIGYADGWLRRMQHFSVLVDGKRAPIVGRVCMDQMMIRLPYELPVGTKVTLIGEQQGDRISVDDVAAHVNTINYEIPCTISYRVPRIFLKNKSIIEVRNAVL.

Lys-40 functions as the Proton acceptor; specific for D-alanine in the catalytic mechanism. Position 40 is an N6-(pyridoxal phosphate)lysine (Lys-40). Position 139 (Arg-139) interacts with substrate. Tyr-268 acts as the Proton acceptor; specific for L-alanine in catalysis. Met-315 contributes to the substrate binding site.

The protein belongs to the alanine racemase family. Pyridoxal 5'-phosphate serves as cofactor.

It carries out the reaction L-alanine = D-alanine. It participates in amino-acid biosynthesis; D-alanine biosynthesis; D-alanine from L-alanine: step 1/1. Functionally, catalyzes the interconversion of L-alanine and D-alanine. May also act on other amino acids. This chain is Alanine racemase (alr), found in Anoxybacillus flavithermus (strain DSM 21510 / WK1).